A 689-amino-acid chain; its full sequence is Glycine--tRNA ligase beta subunit (689 aa).

It belongs to the class-II aminoacyl-tRNA synthetase family. As to quaternary structure, tetramer of two alpha and two beta subunits.

It localises to the cytoplasm. The catalysed reaction is tRNA(Gly) + glycine + ATP = glycyl-tRNA(Gly) + AMP + diphosphate. The chain is Glycine--tRNA ligase beta subunit from Acinetobacter baylyi (strain ATCC 33305 / BD413 / ADP1).